A 296-amino-acid polypeptide reads, in one-letter code: Giardin subunit alpha-2 (296 aa).

Annexin repeat units lie at residues 2–71 (PKLS…MDLF), 73–143 (DRHE…MEKW), 153–223 (GSPD…AHFA), and 226–293 (GMHK…TLWR).

It belongs to the annexin family. Giardin subunit alpha subfamily.

The protein resides in the cytoplasm. The protein localises to the cytoskeleton. Its function is as follows. Giardins are involved in parasite attachment to the intestinal mucosa and in the cytoskeletal disassembly and reassembly that marks the transition from infectious trophozoite to transmissible cyst. They may interact with other cytoskeletal proteins such as microtubules in the microribbons or crossbridges, to maintain the integrity of the ventral disk. In Giardia intestinalis (Giardia lamblia), this protein is Giardin subunit alpha-2.